The sequence spans 703 residues: RING finger protein 214 (703 aa).

Disordered stretches follow at residues 1 to 59, 104 to 134, and 146 to 197; these read MAAS…TITK, GSQS…VTRS, and SRNC…SSSL. Alanine 2 carries the N-acetylalanine modification. Phosphoserine occurs at positions 15, 40, 47, and 54. Residues 37–59 are compositionally biased toward polar residues; sequence TKDSAQKQKNSPLLSVSSQTITK. 2 positions are modified to phosphoserine: serine 176 and serine 196. Positions 220-379 form a coiled coil; that stretch reads QDIEKNLDKM…AEKEAELHLT (160 aa). Residues 486–552 are disordered; sequence FPILNPALSQ…SAETPRPQPV (67 aa). A compositionally biased stretch (low complexity) spans 493-504; the sequence is LSQPSQPSSPLP. Serine 497, serine 511, and serine 516 each carry phosphoserine. Positions 523–536 are enriched in pro residues; sequence PHMPPAASIPPPPG. The RING-type; atypical zinc finger occupies 658 to 700; the sequence is CLMCQKLVQPSELHPMACTHVLHKECIKFWAQTNTNDTCPFCP.

This Homo sapiens (Human) protein is RING finger protein 214 (RNF214).